Consider the following 202-residue polypeptide: Adenylate kinase (202 aa).

12 to 20 (GVPGVGKTT) lines the ATP pocket.

It belongs to the archaeal adenylate kinase family.

It is found in the cytoplasm. The catalysed reaction is AMP + ATP = 2 ADP. In Aeropyrum pernix (strain ATCC 700893 / DSM 11879 / JCM 9820 / NBRC 100138 / K1), this protein is Adenylate kinase (adkA).